A 72-amino-acid chain; its full sequence is Sperm protein associated with the nucleus on the X chromosome N1 (72 aa).

The segment at 1–40 is disordered; sequence MEKPTSSTNGEKRKSPCDSNNKNDEMQETPNRDLVLEPSL. Basic and acidic residues predominate over residues 10-35; it reads GEKRKSPCDSNNKNDEMQETPNRDLV.

It belongs to the SPAN-X family.

This chain is Sperm protein associated with the nucleus on the X chromosome N1 (SPANXN1), found in Gorilla gorilla gorilla (Western lowland gorilla).